Here is a 183-residue protein sequence, read N- to C-terminus: UPF0200 protein MmarC6_1392 (183 aa).

8 to 15 (GMPGSGKS) contributes to the ATP binding site.

The protein belongs to the UPF0200 family.

The polypeptide is UPF0200 protein MmarC6_1392 (Methanococcus maripaludis (strain C6 / ATCC BAA-1332)).